The following is a 1675-amino-acid chain: MAQILPIRFQEHLQLQNLGINPANIGFSTLTMESDKFICIREKVGEQAQVVIIDMNDPSNPIRRPISADSAIMNPASKVIALKAGKTLQIFNIEMKSKMKAHTMTDDVTFWKWISLNTVALVTDNAVYHWSMEGESQPVKMFDRHSSLAGCQIINYRTDAKQKWLLLTGISAQQNRVVGAMQLYSVDRKVSQPIEGHAASFAQFKMEGNAEESTLFCFAVRGQAGGKLHIIEVGTPPTGNQPFPKKAVDVFFPPEAQNDFPVAMQISEKHDVVFLITKYGYIHLYDLETGTCIYMNRISGETIFVTAPHEATAGIIGVNRKGQVLSVCVEEENIIPYITNVLQNPDLALRMAVRNNLAGAEELFARKFNALFAQGNYSEAAKVAANAPKGILRTPDTIRRFQSVPAQPGQTSPLLQYFGILLDQGQLNKYESLELCRPVLQQGRKQLLEKWLKEDKLECSEELGDLVKSVDPTLALSVYLRANVPNKVIQCFAETGQVQKIVLYAKKVGYTPDWIFLLRNVMRISPDQGQQFAQMLVQDEEPLADITQIVDVFMEYNLIQQCTAFLLDALKNNRPSEGPLQTRLLEMNLMHAPQVADAILGNQMFTHYDRAHIAQLCEKAGLLQRALEHFTDLYDIKRAVVHTHLLNPEWLVNYFGSLSVEDSLECLRAMLSANIRQNLQIWVQVASKYHEQLSTQSLIELFESFKSFEGLFYFLGSIVNFSQDPDVHFKYIQAACKTGQIKEVERICRESNCYDPERVKNFLKEAKLTDQLPLIIVCDRFDFVHDLVLYLYRNSLQKYIEIYVQKVNPSRLPVVIGGLLDVDCSEDVIKNLILVVRGQFSTDELVAEVEKRNRLKLLLPWLEARIHEGCEEPATHNALAKIYIDSNNNPERFLRENPYYDSRVVGKYCEKRDPHLACVAYERGQCDLELINVCNENSLFKSLSRYLVRRKDPELWGSVLLESNPYRRPLIDQVVQTALSETQDPEEVSVTVKAFMTADLPNELIELLEKIVLDNSVFSEHRNLQNLLILTAIKADRTRVMEYINRLDNYDAPDIANIAISNELFEEAFAIFRKFDVNTSAVQVLIEHIGNLDRAYEFAERCNEPAVWSQLAKAQLQKGMVKEAIDSYIKADDPSSYMEVVQAANTSGNWEELVKYLQMARKKARESYVETELIFALAKTNRLAELEEFINGPNNAHIQQVGDRCYDEKMYDAAKLLYNNVSNFGRLASTLVHLGEYQAAVDGARKANSTRTWKEVCFACVDGKEFRLAQMCGLHIVVHADELEELINYYQDRGYFEELITMLEAALGLERAHMGMFTELAILYSKFKPQKMREHLELFWSRVNIPKVLRAAEQAHLWAELVFLYDKYEEYDNAIITMMNHPTDAWKEGQFKDIITKVANVELYYKAIQFYLEFKPLLLNDLLMVLSPRLAHTRAVNYFSKVKQLPLVKPYLRSVQNHNNKSVNESLNNLFITEEDYQALRTSIDAYDNFDNISLAQRLEKHELIEFRRIAAYLFKGNNRWKQSVELCKKDSLYKDAMQYASESKDTELAEELLQWFLQEEKRECFGACLFTCYDLLRPDVVLETAWRHNIMDFAMPYFIQVMKEYLTKVDKLDASESLRKEEEQATETQPIVYGQPQLMLTAGPSVAVPPQAPFGYGYTAPPYGQPQPGFGYSM.

Residue alanine 2 is modified to N-acetylalanine. Residues 2-479 (AQILPIRFQE…VDPTLALSVY (478 aa)) are globular terminal domain. WD40-like repeat stretches follow at residues 24 to 67 (NIGF…RPIS), 68 to 107 (ADSA…MTDD), 108 to 149 (VTFW…SSLA), 150 to 195 (GCQI…QPIE), 196 to 257 (GHAA…PEAQ), 258 to 301 (NDFP…ISGE), and 302 to 330 (TIFV…VCVE). Phosphoserine is present on serine 67. The residue at position 105 (threonine 105) is a Phosphothreonine. At tyrosine 184 the chain carries Phosphotyrosine. Threonine 394 carries the post-translational modification Phosphothreonine. Residues 449-465 (EKWLKEDKLECSEELGD) are binding site for the uncoating ATPase, involved in lattice disassembly. The tract at residues 480–523 (LRANVPNKVIQCFAETGQVQKIVLYAKKVGYTPDWIFLLRNVMR) is flexible linker. Positions 524-634 (ISPDQGQQFA…RALEHFTDLY (111 aa)) are distal segment. Positions 524 to 1675 (ISPDQGQQFA…QPQPGFGYSM (1152 aa)) are heavy chain arm. 7 CHCR repeats span residues 537 to 683 (VQDE…QIWV), 686 to 828 (ASKY…SEDV), 833 to 972 (ILVV…PLID), 979 to 1124 (LSET…VKEA), 1128 to 1269 (YIKA…FRLA), 1274 to 1420 (LHIV…LLLN), and 1423 to 1566 (LMVL…RECF). Residue tyrosine 634 is modified to Phosphotyrosine. Positions 639–1675 (AVVHTHLLNP…QPQPGFGYSM (1037 aa)) are proximal segment. At lysine 737 the chain carries N6-succinyllysine. Position 856 is an N6-acetyllysine (lysine 856). A Phosphotyrosine modification is found at tyrosine 899. Serine 1167 is modified (phosphoserine). Residue tyrosine 1206 is modified to Phosphotyrosine. The tract at residues 1213 to 1522 (AAKLLYNNVS…YLFKGNNRWK (310 aa)) is involved in binding clathrin light chain. A Phosphoserine modification is found at serine 1229. At lysine 1441 the chain carries N6-acetyllysine; alternate. Lysine 1441 carries the post-translational modification N6-succinyllysine; alternate. Tyrosine 1477 and tyrosine 1487 each carry phosphotyrosine. Residue serine 1494 is modified to Phosphoserine. At lysine 1501 the chain carries N6-acetyllysine. Residues 1550-1675 (AEELLQWFLQ…QPQPGFGYSM (126 aa)) form a trimerization region.

The protein belongs to the clathrin heavy chain family. Clathrin triskelions, composed of 3 heavy chains and 3 light chains, are the basic subunits of the clathrin coat. In the presence of light chains, hub assembly is influenced by both the pH and the concentration of calcium. Interacts with HIP1. Interacts with DENND1A, DENND1B and DENND1C. Interacts with OCRL. Interacts with ERBB2. Interacts with FKBP6. Interacts with CKAP5 and TACC3 forming the TACC3/ch-TOG/clathrin complex located at spindle inter-microtubules bridges; the complex implicates clathrin triskelions; TACC3 and CLTC are proposed to form a composite microtubule interaction surface. Interacts with ATG16L1 (via N-terminus). Interacts with RFTN1; the interaction occurs in response to pathogens. Interacts with USP2 isoform 2. Interacts with TMEM106B (via N-terminus). Interacts with DNAJC6; this interaction produces a local change in heavy-chain contacts, creating a detectable global distortion of the clathrin coat and leads to the recruitment of HSPA8.

The protein localises to the cytoplasmic vesicle membrane. It is found in the membrane. Its subcellular location is the coated pit. It localises to the melanosome. The protein resides in the cytoplasm. The protein localises to the cytoskeleton. It is found in the spindle. Functionally, clathrin is the major protein of the polyhedral coat of coated pits and vesicles. Two different adapter protein complexes link the clathrin lattice either to the plasma membrane or to the trans-Golgi network. Acts as a component of the TACC3/ch-TOG/clathrin complex proposed to contribute to stabilization of kinetochore fibers of the mitotic spindle by acting as inter-microtubule bridge. The TACC3/ch-TOG/clathrin complex is required for the maintenance of kinetochore fiber tension. Plays a role in early autophagosome formation. Interaction with DNAJC6 mediates the recruitment of HSPA8 to the clathrin lattice and creates local destabilization of the lattice promoting uncoating. This chain is Clathrin heavy chain 1, found in Rattus norvegicus (Rat).